Here is a 325-residue protein sequence, read N- to C-terminus: Heat-inducible transcription repressor HrcA (325 aa).

The protein belongs to the HrcA family.

In terms of biological role, negative regulator of class I heat shock genes (grpE-dnaK-dnaJ and groELS operons). Prevents heat-shock induction of these operons. The chain is Heat-inducible transcription repressor HrcA from Staphylococcus aureus (strain bovine RF122 / ET3-1).